The chain runs to 144 residues: Large ribosomal subunit protein uL15 (144 aa).

The tract at residues 1–50 (MRLNTLSPAAGAKSAKKRVGRGIGSGLGKTGGRGVKGAGSRSGGGVRAGF) is disordered. Gly residues predominate over residues 21–50 (RGIGSGLGKTGGRGVKGAGSRSGGGVRAGF).

The protein belongs to the universal ribosomal protein uL15 family. As to quaternary structure, part of the 50S ribosomal subunit.

In terms of biological role, binds to the 23S rRNA. This chain is Large ribosomal subunit protein uL15, found in Tolumonas auensis (strain DSM 9187 / NBRC 110442 / TA 4).